The sequence spans 70 residues: U-actitoxin-Avd11a (70 aa).

Positions 36 to 70 constitute a ShKT domain; it reads CNDYKSSSYCRSVGSRNECGIHKYRMYCRKTCGSC. 3 cysteine pairs are disulfide-bonded: cysteine 36-cysteine 70, cysteine 45-cysteine 63, and cysteine 54-cysteine 67. The tract at residues 58–59 is crucial for binding to potassium channels; the sequence is KY.

The protein belongs to the sea anemone type 1 potassium channel toxin family. Type 1b subfamily.

The protein resides in the secreted. It localises to the nematocyst. Its function is as follows. Inhibits voltage-gated potassium channels (Kv1/KCNA). The chain is U-actitoxin-Avd11a from Anemonia viridis (Snakelocks anemone).